The primary structure comprises 83 residues: Protein ORF5 (83 aa).

It belongs to the microviridae C protein family.

Functionally, plays a central role in the packaging of viral DNA into phage procapsid, which occurs in the late stage of infection. Can interact with the replicative complex after the completion of one round of DNA synthesis. When protein ORF5 is bound to the replicative form, the complex becomes accessible to procapsid and serves as a DNA packaging apparatus. The protein is Protein ORF5 of Spiroplasma melliferum (SpV4).